The sequence spans 186 residues: NADH-dependent FMN reductase SfnE (186 aa).

The protein belongs to the SsuE family.

The enzyme catalyses FMNH2 + NAD(+) = FMN + NADH + 2 H(+). Involved in the dimethyl sulfide degradation pathway. Catalyzes the NADH-dependent reduction of FMN. The polypeptide is NADH-dependent FMN reductase SfnE (Pseudomonas putida (Arthrobacter siderocapsulatus)).